Consider the following 401-residue polypeptide: Imidazolonepropionase (401 aa).

Fe(3+) contacts are provided by His66 and His68. Zn(2+)-binding residues include His66 and His68. Residues Arg75, Tyr138, and His171 each coordinate 4-imidazolone-5-propanoate. Tyr138 contacts N-formimidoyl-L-glutamate. His236 is a binding site for Fe(3+). His236 contributes to the Zn(2+) binding site. Gln239 is a 4-imidazolone-5-propanoate binding site. Asp311 contacts Fe(3+). Asp311 provides a ligand contact to Zn(2+). N-formimidoyl-L-glutamate contacts are provided by Asn313 and Gly315. Thr316 provides a ligand contact to 4-imidazolone-5-propanoate.

The protein belongs to the metallo-dependent hydrolases superfamily. HutI family. Zn(2+) is required as a cofactor. Fe(3+) serves as cofactor.

It localises to the cytoplasm. It catalyses the reaction 4-imidazolone-5-propanoate + H2O = N-formimidoyl-L-glutamate. The protein operates within amino-acid degradation; L-histidine degradation into L-glutamate; N-formimidoyl-L-glutamate from L-histidine: step 3/3. In terms of biological role, catalyzes the hydrolytic cleavage of the carbon-nitrogen bond in imidazolone-5-propanoate to yield N-formimidoyl-L-glutamate. It is the third step in the universal histidine degradation pathway. The protein is Imidazolonepropionase of Pseudomonas putida (strain ATCC 47054 / DSM 6125 / CFBP 8728 / NCIMB 11950 / KT2440).